A 545-amino-acid polypeptide reads, in one-letter code: Oligopeptide-binding protein OppA (545 aa).

An N-terminal signal peptide occupies residues 1–20 (MKKRWSIVTLMLIFTLVLSA). Residue C21 is the site of N-palmitoyl cysteine attachment. Residue C21 is the site of S-diacylglycerol cysteine attachment. T470 carries the phosphothreonine modification.

Belongs to the bacterial solute-binding protein 5 family. The complex is composed of two ATP-binding proteins (OppD and OppF), two transmembrane proteins (OppB and OppC) and a solute-binding protein (OppA). OppA interacts with FloT in detergent-resistant membranes (DRM). Colocalizes rarely with FloT membrane assemblies.

The protein resides in the cell membrane. Its subcellular location is the membrane raft. Its function is as follows. Part of the ABC transporter complex OppABCDF involved in the uptake of oligopeptides. Plays an important nutritional role. Binds peptides containing up to five amino acids residues regardless of their sequence, with highest affinity for tetra- and pentapeptides. Binds to the sporulation-promoting peptide PhrE (Ser-Arg-Asn-Val-Thr). Required for sporulation and genetic competence. The sequence is that of Oligopeptide-binding protein OppA from Bacillus subtilis (strain 168).